Reading from the N-terminus, the 842-residue chain is Non-motile and phage-resistance protein (842 aa).

A run of 3 helical transmembrane segments spans residues 29-50, 283-303, and 343-363; these read VFVR…AFGV, GAFS…LLMI, and VYLS…VVSG. Residues 318–389 enclose the PAS domain; the sequence is SERRFRLAVE…QALANAAMYG (72 aa). In terms of domain architecture, Histidine kinase spans 607–830; that stretch reads NMSHELRTPL…TVSFTLPVRH (224 aa). His-610 is subject to Phosphohistidine; by autocatalysis.

It localises to the cell membrane. The catalysed reaction is ATP + protein L-histidine = ADP + protein N-phospho-L-histidine.. In terms of biological role, member of the two-component regulatory system involved in the regulation of polar organelle development. PleC functions as a membrane-associated protein kinase that transfers phosphate to the response regulator PleD, leading to its activation. This Caulobacter vibrioides (strain ATCC 19089 / CIP 103742 / CB 15) (Caulobacter crescentus) protein is Non-motile and phage-resistance protein (pleC).